Here is a 469-residue protein sequence, read N- to C-terminus: Neuraminidase (469 aa).

Topologically, residues 1 to 9 are intravirion; that stretch reads MNPNQKIIT. Residues 10–30 traverse the membrane as a helical segment; it reads IGSVSLTIATVCFLMQIAILV. Positions 11 to 33 are involved in apical transport and lipid raft association; sequence GSVSLTIATVCFLMQIAILVTTV. Residues 31 to 469 are Virion surface-facing; it reads TTVTLHFKQH…DGANINFMPI (439 aa). Positions 36-88 are hypervariable stalk region; that stretch reads HFKQHECDSPASNQVMPCEPIIIERNITEIVYLNNTTIEKEICPKVVEYRNWS. 4 N-linked (GlcNAc...) asparagine; by host glycosylation sites follow: Asn-61, Asn-69, Asn-70, and Asn-86. The segment at 91 to 469 is head of neuraminidase; that stretch reads QCQITGFAPF…DGANINFMPI (379 aa). Intrachain disulfides connect Cys-92-Cys-417, Cys-124-Cys-129, Cys-175-Cys-193, Cys-183-Cys-230, Cys-232-Cys-237, Cys-278-Cys-291, Cys-280-Cys-289, Cys-318-Cys-337, and Cys-421-Cys-447. Position 118 (Arg-118) interacts with substrate. Asn-146 carries an N-linked (GlcNAc...) asparagine; by host glycan. Asp-151 serves as the catalytic Proton donor/acceptor. Arg-152 serves as a coordination point for substrate. 2 N-linked (GlcNAc...) asparagine; by host glycosylation sites follow: Asn-200 and Asn-234. Residue 276–277 coordinates substrate; sequence EE. Arg-292 is a binding site for substrate. 3 residues coordinate Ca(2+): Asp-293, Gly-297, and Asp-324. The interval 324 to 349 is disordered; the sequence is DTPRNDDRSSNSNCRNPNNERGTQGV. Low complexity predominate over residues 333-342; it reads SNSNCRNPNN. Residues Gly-345, Thr-346, and Gln-347 each contribute to the Ca(2+) site. Arg-371 serves as a coordination point for substrate. Asn-402 carries an N-linked (GlcNAc...) asparagine; by host glycan. The active-site Nucleophile is Tyr-406.

It belongs to the glycosyl hydrolase 34 family. In terms of assembly, homotetramer. Requires Ca(2+) as cofactor. Post-translationally, N-glycosylated.

It is found in the virion membrane. The protein localises to the host apical cell membrane. The enzyme catalyses Hydrolysis of alpha-(2-&gt;3)-, alpha-(2-&gt;6)-, alpha-(2-&gt;8)- glycosidic linkages of terminal sialic acid residues in oligosaccharides, glycoproteins, glycolipids, colominic acid and synthetic substrates.. Inhibited by the neuraminidase inhibitors zanamivir (Relenza) and oseltamivir (Tamiflu). These drugs interfere with the release of progeny virus from infected cells and are effective against all influenza strains. Resistance to neuraminidase inhibitors is quite rare. Catalyzes the removal of terminal sialic acid residues from viral and cellular glycoconjugates. Cleaves off the terminal sialic acids on the glycosylated HA during virus budding to facilitate virus release. Additionally helps virus spread through the circulation by further removing sialic acids from the cell surface. These cleavages prevent self-aggregation and ensure the efficient spread of the progeny virus from cell to cell. Otherwise, infection would be limited to one round of replication. Described as a receptor-destroying enzyme because it cleaves a terminal sialic acid from the cellular receptors. May facilitate viral invasion of the upper airways by cleaving the sialic acid moieties on the mucin of the airway epithelial cells. Likely to plays a role in the budding process through its association with lipid rafts during intracellular transport. May additionally display a raft-association independent effect on budding. Plays a role in the determination of host range restriction on replication and virulence. Sialidase activity in late endosome/lysosome traffic seems to enhance virus replication. The protein is Neuraminidase of Aves (Human).